The sequence spans 345 residues: Nicotinate-nucleotide--dimethylbenzimidazole phosphoribosyltransferase (345 aa).

Glu-311 (proton acceptor) is an active-site residue.

It belongs to the CobT family.

The catalysed reaction is 5,6-dimethylbenzimidazole + nicotinate beta-D-ribonucleotide = alpha-ribazole 5'-phosphate + nicotinate + H(+). It participates in nucleoside biosynthesis; alpha-ribazole biosynthesis; alpha-ribazole from 5,6-dimethylbenzimidazole: step 1/2. Catalyzes the synthesis of alpha-ribazole-5'-phosphate from nicotinate mononucleotide (NAMN) and 5,6-dimethylbenzimidazole (DMB). This is Nicotinate-nucleotide--dimethylbenzimidazole phosphoribosyltransferase from Janthinobacterium sp. (strain Marseille) (Minibacterium massiliensis).